The primary structure comprises 212 residues: Nitric oxide synthase (212 aa).

Residue Tyr11 coordinates heme b. The segment at Lys30 to Met50 is calmodulin-binding. The Flavodoxin-like domain maps to Ala60–Gly212. The interval Ser155–Ser175 is disordered. The segment covering Asp158–Phe173 has biased composition (basic and acidic residues). Ala186–Gly212 is an FMN binding site.

This sequence belongs to the NOS family. Heme b is required as a cofactor. The cofactor is FAD. FMN serves as cofactor.

The catalysed reaction is 2 L-arginine + 3 NADPH + 4 O2 + H(+) = 2 L-citrulline + 2 nitric oxide + 3 NADP(+) + 4 H2O. In terms of biological role, produces nitric oxide (NO) which is a messenger molecule with diverse functions throughout the body. This chain is Nitric oxide synthase, found in Squalus acanthias (Spiny dogfish).